Here is a 618-residue protein sequence, read N- to C-terminus: Beta-xylosidase (618 aa).

Disordered stretches follow at residues 76–100 (ERDR…QEES) and 463–509 (LEPQ…PPIQ).

It belongs to the glycosyl hydrolase 52 family.

Its subcellular location is the secreted. It catalyses the reaction Hydrolysis of (1-&gt;4)-beta-D-xylans, to remove successive D-xylose residues from the non-reducing termini.. Its pathway is glycan degradation; xylan degradation. This is Beta-xylosidase (xylA) from Geobacillus stearothermophilus (Bacillus stearothermophilus).